The following is a 248-amino-acid chain: mRNA-decapping protein OPG122 (248 aa).

One can recognise a Nudix hydrolase domain in the interval 45–227; sequence HKRVSVSAIL…IAKYALDTAK (183 aa). The Nudix box signature appears at 125 to 147; the sequence is GGILKRGENVPECLSREIKEEVN. Glutamate 132 contributes to the Mg(2+) binding site. Glutamate 141 (nucleophile) is an active-site residue. Glutamate 145 serves as a coordination point for Mn(2+). Residue aspartate 167 participates in Mg(2+) binding.

This sequence belongs to the Nudix hydrolase family. The cofactor is Mg(2+). Requires Mn(2+) as cofactor.

It localises to the host mitochondrion. In terms of biological role, decapping enzyme that remove the protective 5'-cap from both host and viral mRNAs to commit transcripts for decay by the cellular exonuclease XRN1. Preferentially targets spliced mRNAs and since all viral genes are intronless, it preferentially targets host over viral transcripts. Acceleration of the turnover of cellular transcripts promotes the shutoff of host protein synthesis and therefore diminish the magnitude of antiviral response. The polypeptide is mRNA-decapping protein OPG122 (OPG122) (Variola virus (isolate Human/India/Ind3/1967) (VARV)).